A 380-amino-acid polypeptide reads, in one-letter code: Deoxyguanosinetriphosphate triphosphohydrolase-like protein (380 aa).

Residues 79–196 (RLTHTLEVQQ…VDAADALAYT (118 aa)) enclose the HD domain.

Belongs to the dGTPase family. Type 2 subfamily.

The sequence is that of Deoxyguanosinetriphosphate triphosphohydrolase-like protein from Deinococcus deserti (strain DSM 17065 / CIP 109153 / LMG 22923 / VCD115).